Reading from the N-terminus, the 262-residue chain is 3-methyl-2-oxobutanoate hydroxymethyltransferase (262 aa).

Mg(2+) contacts are provided by Asp42 and Asp81. 3-methyl-2-oxobutanoate-binding positions include 42 to 43 (DS), Asp81, and Lys110. Glu112 is a Mg(2+) binding site. Glu180 acts as the Proton acceptor in catalysis.

It belongs to the PanB family. Homodecamer; pentamer of dimers. It depends on Mg(2+) as a cofactor.

It is found in the cytoplasm. The catalysed reaction is 3-methyl-2-oxobutanoate + (6R)-5,10-methylene-5,6,7,8-tetrahydrofolate + H2O = 2-dehydropantoate + (6S)-5,6,7,8-tetrahydrofolate. It functions in the pathway cofactor biosynthesis; (R)-pantothenate biosynthesis; (R)-pantoate from 3-methyl-2-oxobutanoate: step 1/2. In terms of biological role, catalyzes the reversible reaction in which hydroxymethyl group from 5,10-methylenetetrahydrofolate is transferred onto alpha-ketoisovalerate to form ketopantoate. This is 3-methyl-2-oxobutanoate hydroxymethyltransferase from Legionella pneumophila (strain Lens).